The primary structure comprises 636 residues: MSESATANANRETLGFQAEVKQLLQLMIHSLYSNKEIFLRELVSNASDACDKLRFEALNNSALYGDDSELKIRIAFDKDARTITISDNGIGLSRDEAVEHLGTIAKSGTKEFFSALTGDQAKDAHLIGQFGVGFYSSFIIADKVTVVSRRAGVEANQAVCWESGGEGDYTVEMVEKATRGTDVTLHLREGEDEFLGGWKLKSIIRKYSDHITLPIVMKKEDWKDGEQVMTEEDETVNQANALWVRSKSDITEEQYKEFYKHVAHDFEDPLAWTHARVEGKQEYTQLLYIPARAPFDLWDRNARHGIKLYVRRVFIMDDAEQLMPLYMRFVRGVVDSSDLPLNVSREILQQSKDIDGIRSGCTRKVLGMLEDLAENDKEKYAKFWEAFGSVLKEGVGEDHANKEKIAGLIRFSSTHNDTAEQNVSLADYIGRMKEGQEKIYFVTADTFNAAKNSPHLEIFRKKGIEVLLLSDRVDEWVVGHLTEFDGKHLQSVAKGGLDLGKLEDEAEKQEAEKAADDYKELLEKVKTSLGDKVKDVRVTYRLTDSPSCLVSDEHDPSGNLARLMKAAGQPMPNSKPILEINPQHPAVMRLKYEESRFDDWAALLFEQATLAEGGQLDDPAGFVKRINDLMMALSAK.

Positions 1 to 345 are a; substrate-binding; sequence MSESATANAN…SSDLPLNVSR (345 aa). The b stretch occupies residues 346–562; it reads EILQQSKDID…EHDPSGNLAR (217 aa). Positions 563–636 are c; sequence LMKAAGQPMP…NDLMMALSAK (74 aa).

This sequence belongs to the heat shock protein 90 family. In terms of assembly, homodimer.

It localises to the cytoplasm. In terms of biological role, molecular chaperone. Has ATPase activity. The chain is Chaperone protein HtpG from Dechloromonas aromatica (strain RCB).